Consider the following 171-residue polypeptide: Methylated-DNA--protein-cysteine methyltransferase (171 aa).

Residue cysteine 139 is the Nucleophile; methyl group acceptor of the active site.

Belongs to the MGMT family.

Its subcellular location is the cytoplasm. The catalysed reaction is a 6-O-methyl-2'-deoxyguanosine in DNA + L-cysteinyl-[protein] = S-methyl-L-cysteinyl-[protein] + a 2'-deoxyguanosine in DNA. It catalyses the reaction a 4-O-methyl-thymidine in DNA + L-cysteinyl-[protein] = a thymidine in DNA + S-methyl-L-cysteinyl-[protein]. Functionally, involved in the cellular defense against the biological effects of O6-methylguanine (O6-MeG) and O4-methylthymine (O4-MeT) in DNA. Repairs the methylated nucleobase in DNA by stoichiometrically transferring the methyl group to a cysteine residue in the enzyme. This is a suicide reaction: the enzyme is irreversibly inactivated. In Salmonella typhi, this protein is Methylated-DNA--protein-cysteine methyltransferase.